We begin with the raw amino-acid sequence, 413 residues long: Probable tRNA pseudouridine synthase D (413 aa).

D97 (nucleophile) is an active-site residue. Residues 167–370 form the TRUD domain; that stretch reads AVPNYYGYQR…YGSYRRARLE (204 aa).

Belongs to the pseudouridine synthase TruD family.

The enzyme catalyses uridine(13) in tRNA = pseudouridine(13) in tRNA. Could be responsible for synthesis of pseudouridine from uracil-13 in transfer RNAs. In Pyrobaculum arsenaticum (strain DSM 13514 / JCM 11321 / PZ6), this protein is Probable tRNA pseudouridine synthase D.